Consider the following 85-residue polypeptide: Progonadoliberin-2 (85 aa).

A signal peptide spans 1 to 23 (MCVSRLALLLGLLLCVGAQLSFA). A Pyrrolidone carboxylic acid modification is found at glutamine 24. The residue at position 33 (glycine 33) is a Glycine amide.

The protein belongs to the GnRH family. Expressed in only one cell group in the mesencephalon.

It is found in the secreted. Its function is as follows. Stimulates the secretion of gonadotropins. The sequence is that of Progonadoliberin-2 (gnrh2) from Haplochromis burtoni (Burton's mouthbrooder).